The following is a 62-amino-acid chain: Small polypeptide DEVIL 17 (62 aa).

The tract at residues R27–K58 is required for DVL/RTFL small polypeptide activity. Residues R39 to W56 traverse the membrane as a helical segment.

The protein belongs to the DVL/RTFL small polypeptides family.

The protein resides in the cell membrane. Its function is as follows. Small polypeptide acting as a regulatory molecule which coordinates cellular responses required for differentiation, growth and development, probably by restricting polar cell proliferation in lateral organs and coordinating socket cell recruitment and differentiation at trichome sites. In Arabidopsis thaliana (Mouse-ear cress), this protein is Small polypeptide DEVIL 17.